The following is a 160-amino-acid chain: UPF0178 protein BPP1051 (160 aa).

The protein belongs to the UPF0178 family.

In Bordetella parapertussis (strain 12822 / ATCC BAA-587 / NCTC 13253), this protein is UPF0178 protein BPP1051.